Reading from the N-terminus, the 376-residue chain is Germination-specific cysteine protease 1 (376 aa).

Positions 1-22 are cleaved as a signal peptide; sequence MAPSTKVLSLLLLYVVVSLASG. A propeptide spans 23 to 144 (activation peptide); sequence DESIINDHLQ…KYSAAVNGKE (122 aa). Asn93 carries an N-linked (GlcNAc...) asparagine glycan. 3 cysteine pairs are disulfide-bonded: Cys166/Cys208, Cys200/Cys241, and Cys299/Cys351. Residue Cys169 is part of the active site. Active-site residues include His305 and Asn325.

This sequence belongs to the peptidase C1 family.

Probable thiol protease. The chain is Germination-specific cysteine protease 1 from Arabidopsis thaliana (Mouse-ear cress).